The sequence spans 500 residues: Type-2 serine--tRNA ligase (500 aa).

A305 lines the L-serine pocket. A Zn(2+)-binding site is contributed by C307. R337 serves as a coordination point for L-serine. ATP contacts are provided by residues 337-339 and 348-349; these read RYE and RV. L-serine is bound by residues 354–356 and Q401; that span reads RIE. E356 lines the Zn(2+) pocket. E430 lines the ATP pocket. An L-serine-binding site is contributed by N433. C459 serves as a coordination point for Zn(2+). ATP is bound at residue R466.

Belongs to the class-II aminoacyl-tRNA synthetase family. Type-2 seryl-tRNA synthetase subfamily. As to quaternary structure, homodimer. Requires Zn(2+) as cofactor.

It localises to the cytoplasm. It carries out the reaction tRNA(Ser) + L-serine + ATP = L-seryl-tRNA(Ser) + AMP + diphosphate + H(+). It catalyses the reaction tRNA(Sec) + L-serine + ATP = L-seryl-tRNA(Sec) + AMP + diphosphate + H(+). It participates in aminoacyl-tRNA biosynthesis; selenocysteinyl-tRNA(Sec) biosynthesis; L-seryl-tRNA(Sec) from L-serine and tRNA(Sec): step 1/1. Catalyzes the attachment of serine to tRNA(Ser). Is also able to aminoacylate tRNA(Sec) with serine, to form the misacylated tRNA L-seryl-tRNA(Sec), which will be further converted into selenocysteinyl-tRNA(Sec). The sequence is that of Type-2 serine--tRNA ligase from Methanothrix thermoacetophila (strain DSM 6194 / JCM 14653 / NBRC 101360 / PT) (Methanosaeta thermophila).